Consider the following 336-residue polypeptide: Glycerol-3-phosphate dehydrogenase [NAD(P)+] (336 aa).

NADPH contacts are provided by serine 14, tryptophan 15, arginine 35, arginine 36, and lysine 109. Positions 109 and 139 each coordinate sn-glycerol 3-phosphate. Alanine 143 is an NADPH binding site. Positions 194, 247, 257, 258, and 259 each coordinate sn-glycerol 3-phosphate. The active-site Proton acceptor is lysine 194. An NADPH-binding site is contributed by arginine 258. Glutamate 284 is an NADPH binding site.

It belongs to the NAD-dependent glycerol-3-phosphate dehydrogenase family.

The protein localises to the cytoplasm. The enzyme catalyses sn-glycerol 3-phosphate + NAD(+) = dihydroxyacetone phosphate + NADH + H(+). It carries out the reaction sn-glycerol 3-phosphate + NADP(+) = dihydroxyacetone phosphate + NADPH + H(+). It functions in the pathway membrane lipid metabolism; glycerophospholipid metabolism. Catalyzes the reduction of the glycolytic intermediate dihydroxyacetone phosphate (DHAP) to sn-glycerol 3-phosphate (G3P), the key precursor for phospholipid synthesis. The protein is Glycerol-3-phosphate dehydrogenase [NAD(P)+] of Streptomyces avermitilis (strain ATCC 31267 / DSM 46492 / JCM 5070 / NBRC 14893 / NCIMB 12804 / NRRL 8165 / MA-4680).